We begin with the raw amino-acid sequence, 492 residues long: Tyrosinase-like protein 1 (492 aa).

The first 22 residues, 1-22 (MDKMRTLQSLIVKLTLLYGALC), serve as a signal peptide directing secretion. Residues histidine 147, histidine 155, histidine 164, histidine 289, histidine 293, and histidine 316 each contribute to the Cu cation site. Residues 472–492 (SEPPLQLEGPSFTSSFDDPRI) are disordered. Residues 482-492 (SFTSSFDDPRI) are compositionally biased toward polar residues.

It depends on Cu(2+) as a cofactor. Prismatic layer of shell (at protein level). Expressed primarily in the mantle with highest level in the mantle edge and lower level in the mantle pallium.

It is found in the secreted. This Margaritifera margaritifera (Freshwater pearl mussel) protein is Tyrosinase-like protein 1.